Consider the following 549-residue polypeptide: Chaperonin GroEL (549 aa).

ATP-binding positions include 29-32 (TAGP), lysine 50, 86-90 (DGTTT), glycine 418, and aspartate 499.

This sequence belongs to the chaperonin (HSP60) family. In terms of assembly, forms a cylinder of 14 subunits composed of two heptameric rings stacked back-to-back. Interacts with the co-chaperonin GroES.

It localises to the cytoplasm. The enzyme catalyses ATP + H2O + a folded polypeptide = ADP + phosphate + an unfolded polypeptide.. In terms of biological role, together with its co-chaperonin GroES, plays an essential role in assisting protein folding. The GroEL-GroES system forms a nano-cage that allows encapsulation of the non-native substrate proteins and provides a physical environment optimized to promote and accelerate protein folding. The polypeptide is Chaperonin GroEL (Wolbachia pipientis wMel).